The following is a 626-amino-acid chain: Protein ALEX (626 aa).

Disordered stretches follow at residues 1 to 29, 173 to 223, 236 to 473, and 556 to 612; these read MMAR…LEPM, TTAH…AAHP, AAPG…APRS, and AASV…NNSR. Composition is skewed to polar residues over residues 186–195 and 255–270; these read KSTAAASSRQ and GSTT…QSRL. Residues 281–312 show a composition bias toward basic and acidic residues; sequence QIRESEQRDPQLRRKQQRWKEPLMPRREEKYP. Low complexity predominate over residues 337-346; it reads QPILTPGQPQ. The span at 366 to 399 shows a compositional bias: pro residues; the sequence is IPTPGQPLPPQPIPTPGRPLTPQPIPTPGRPLTP. The span at 416–435 shows a compositional bias: low complexity; sequence RLLRPGQPMSPQLRQTQGLP. Positions 436-445 are enriched in pro residues; that stretch reads LPQPLLPPGQ. Basic residues predominate over residues 570 to 579; that stretch reads ALSRSRRYPW. Polar residues predominate over residues 600 to 611; the sequence is RRNAVSSSTNNS.

This sequence belongs to the ALEX family. Interacts with the N-terminal region of the XLas isoforms of guanine nucleotide-binding protein G(s) subunit alpha.

The protein localises to the cell membrane. The protein resides in the cell projection. It localises to the ruffle. In terms of biological role, may inhibit the adenylyl cyclase-stimulating activity of guanine nucleotide-binding protein G(s) subunit alpha which is produced from the same locus in a different open reading frame. The protein is Protein ALEX of Homo sapiens (Human).